The sequence spans 82 residues: Exodeoxyribonuclease 7 small subunit (82 aa).

It belongs to the XseB family. In terms of assembly, heterooligomer composed of large and small subunits.

The protein localises to the cytoplasm. The enzyme catalyses Exonucleolytic cleavage in either 5'- to 3'- or 3'- to 5'-direction to yield nucleoside 5'-phosphates.. Its function is as follows. Bidirectionally degrades single-stranded DNA into large acid-insoluble oligonucleotides, which are then degraded further into small acid-soluble oligonucleotides. The sequence is that of Exodeoxyribonuclease 7 small subunit from Colwellia psychrerythraea (strain 34H / ATCC BAA-681) (Vibrio psychroerythus).